Reading from the N-terminus, the 635-residue chain is Biosynthetic arginine decarboxylase (635 aa).

K101 carries the post-translational modification N6-(pyridoxal phosphate)lysine. 284-294 (VDVGGGLGVDY) lines the substrate pocket.

The protein belongs to the Orn/Lys/Arg decarboxylase class-II family. SpeA subfamily. Mg(2+) is required as a cofactor. Requires pyridoxal 5'-phosphate as cofactor.

It catalyses the reaction L-arginine + H(+) = agmatine + CO2. The protein operates within amine and polyamine biosynthesis; agmatine biosynthesis; agmatine from L-arginine: step 1/1. Catalyzes the biosynthesis of agmatine from arginine. In Tolumonas auensis (strain DSM 9187 / NBRC 110442 / TA 4), this protein is Biosynthetic arginine decarboxylase.